A 432-amino-acid chain; its full sequence is Sphingosine N-acyltransferase-like protein ALT7 (432 aa).

The chain crosses the membrane as a helical span at residues 55–75 (IGLSLGSLLLLILMFTCLPYY). N-linked (GlcNAc...) asparagine glycosylation is present at asparagine 77. Transmembrane regions (helical) follow at residues 91–111 (FIFSGVVLFTALRAISMIYLL), 128–148 (FTEQGWLVIHHSLFWTTGMYI), 172–192 (GLTKGYYLLQLAFWLQQIVVV), 226–246 (VGNVILCLVDIVDVLFAFAKL), 250–270 (LGFQYACDVAFCVFLASWLVA), 273–293 (GLYLLVCWSIFTILPTVMPYG), and 338–358 (AFLGLLVGLQVLMLIWLGMIL). The TLC domain maps to 123–366 (KLMVRFTEQG…ILKVAYKVFQ (244 aa)). The segment at 370-395 (ADDTRSDSEESGYGTSDHEGDCYGAQ) is disordered.

It belongs to the sphingosine N-acyltransferase family.

It is found in the membrane. It functions in the pathway mycotoxin biosynthesis. Functionally, sphingosine N-acyltransferase-like protein; part of the gene cluster that mediates the biosynthesis of the host-selective toxins (HSTs) AAL-toxins, sphinganine-analog mycotoxins responsible for Alternaria stem canker on tomato by the tomato pathotype. The biosynthesis starts with the polyketide synthase ALT1-catalyzed C-16 carbon chain assembly from one starter acetyl-CoA unit with malonyl-CoA extender units. ALT1 also selectively transfers methyl groups at the first and the third cycle of chain elongation for AAL toxin. The C-16 polyketide chain is released from the enzyme by a nucleophilic attack of a carbanion, which is derived from R-carbon of glycin by decarboxylation, on the carbonyl carbon of polyketide acyl chain. This step is probably catalyzed by a pyridoxal 5'-phosphate-dependent aminoacyl transferase ALT4. The respective functions of the other enzymes encoded by the cluster have still to be elucidated. The sphingosine N-acyltransferase-like protein ALT7 seems not to act as a resistance/self-tolerance factor against the toxin in the toxin biosynthetic gene cluster, contrary to what is expected. This Alternaria alternata (Alternaria rot fungus) protein is Sphingosine N-acyltransferase-like protein ALT7.